We begin with the raw amino-acid sequence, 257 residues long: 3-methyl-2-oxobutanoate hydroxymethyltransferase (257 aa).

Residues D42 and D81 each contribute to the Mg(2+) site. Residues 42-43 (DS), D81, and K110 contribute to the 3-methyl-2-oxobutanoate site. A Mg(2+)-binding site is contributed by E112. E176 acts as the Proton acceptor in catalysis.

Belongs to the PanB family. Homodecamer; pentamer of dimers. Mg(2+) serves as cofactor.

Its subcellular location is the cytoplasm. The enzyme catalyses 3-methyl-2-oxobutanoate + (6R)-5,10-methylene-5,6,7,8-tetrahydrofolate + H2O = 2-dehydropantoate + (6S)-5,6,7,8-tetrahydrofolate. Its pathway is cofactor biosynthesis; (R)-pantothenate biosynthesis; (R)-pantoate from 3-methyl-2-oxobutanoate: step 1/2. In terms of biological role, catalyzes the reversible reaction in which hydroxymethyl group from 5,10-methylenetetrahydrofolate is transferred onto alpha-ketoisovalerate to form ketopantoate. The polypeptide is 3-methyl-2-oxobutanoate hydroxymethyltransferase (Pelagibacter ubique (strain HTCC1062)).